We begin with the raw amino-acid sequence, 97 residues long: YcgL domain-containing protein PFL_1496 (97 aa).

In terms of domain architecture, YcgL spans 3–87 (RICSIYKSPR…AEDEYIEHLP (85 aa)).

The chain is YcgL domain-containing protein PFL_1496 from Pseudomonas fluorescens (strain ATCC BAA-477 / NRRL B-23932 / Pf-5).